We begin with the raw amino-acid sequence, 620 residues long: Coenzyme F420-dependent sulfite reductase (620 aa).

The 30-residue stretch at 6-35 (LNEIVDSGVCARCGTCTIVCPNGILTFDER) folds into the 4Fe-4S ferredoxin-type 1 domain. Positions 15, 18, 21, 25, 428, 434, 468, 472, 495, 498, 501, 505, 524, 527, 530, and 534 each coordinate [4Fe-4S] cluster. Siroheme is bound at residue C472. 4Fe-4S ferredoxin-type domains are found at residues 486–515 (KYPK…IRGE) and 520–544 (NYNV…VKEE).

It belongs to the nitrite and sulfite reductase 4Fe-4S domain family. It depends on [4Fe-4S] cluster as a cofactor. The cofactor is siroheme.

The catalysed reaction is 3 oxidized coenzyme F420-(gamma-L-Glu)(n) + hydrogen sulfide + 3 H2O + 2 H(+) = 3 reduced coenzyme F420-(gamma-L-Glu)(n) + sulfite. Functionally, catalyzes the reduction of sulfite to sulfide using reduced F420 as the electron source. Involved in sulfite detoxification and assimilation. Cannot use NADH or NADPH. This is Coenzyme F420-dependent sulfite reductase from Methanocaldococcus jannaschii (strain ATCC 43067 / DSM 2661 / JAL-1 / JCM 10045 / NBRC 100440) (Methanococcus jannaschii).